A 225-amino-acid chain; its full sequence is Uracil-DNA glycosylase (225 aa).

Asp65 serves as the catalytic Proton acceptor.

Belongs to the uracil-DNA glycosylase (UDG) superfamily. UNG family.

Its subcellular location is the cytoplasm. It carries out the reaction Hydrolyzes single-stranded DNA or mismatched double-stranded DNA and polynucleotides, releasing free uracil.. Excises uracil residues from the DNA which can arise as a result of misincorporation of dUMP residues by DNA polymerase or due to deamination of cytosine. This is Uracil-DNA glycosylase from Bacillus mycoides (strain KBAB4) (Bacillus weihenstephanensis).